The following is a 128-amino-acid chain: Small ribosomal subunit protein uS8c (128 aa).

The protein belongs to the universal ribosomal protein uS8 family. As to quaternary structure, part of the 30S ribosomal subunit.

Its subcellular location is the plastid. It localises to the chloroplast. One of the primary rRNA binding proteins, it binds directly to 16S rRNA central domain where it helps coordinate assembly of the platform of the 30S subunit. The chain is Small ribosomal subunit protein uS8c (rps8) from Welwitschia mirabilis (Tree tumbo).